The chain runs to 342 residues: Ketol-acid reductoisomerase (NADP(+)) (342 aa).

One can recognise a KARI N-terminal Rossmann domain in the interval 2–182 (AEIYYDNDAD…GGLRAGGIKT (181 aa)). Residues 25–28 (YGSQ), lysine 48, serine 51, serine 53, and 83–86 (DQVQ) contribute to the NADP(+) site. The active site involves histidine 108. Residue glycine 134 coordinates NADP(+). Positions 183–328 (TFTEETETDL…RELRKLFAWN (146 aa)) constitute a KARI C-terminal knotted domain. Residues aspartate 191, glutamate 195, glutamate 227, and glutamate 231 each contribute to the Mg(2+) site. Serine 252 is a binding site for substrate.

The protein belongs to the ketol-acid reductoisomerase family. Requires Mg(2+) as cofactor.

It catalyses the reaction (2R)-2,3-dihydroxy-3-methylbutanoate + NADP(+) = (2S)-2-acetolactate + NADPH + H(+). The enzyme catalyses (2R,3R)-2,3-dihydroxy-3-methylpentanoate + NADP(+) = (S)-2-ethyl-2-hydroxy-3-oxobutanoate + NADPH + H(+). The protein operates within amino-acid biosynthesis; L-isoleucine biosynthesis; L-isoleucine from 2-oxobutanoate: step 2/4. It functions in the pathway amino-acid biosynthesis; L-valine biosynthesis; L-valine from pyruvate: step 2/4. Its function is as follows. Involved in the biosynthesis of branched-chain amino acids (BCAA). Catalyzes an alkyl-migration followed by a ketol-acid reduction of (S)-2-acetolactate (S2AL) to yield (R)-2,3-dihydroxy-isovalerate. In the isomerase reaction, S2AL is rearranged via a Mg-dependent methyl migration to produce 3-hydroxy-3-methyl-2-ketobutyrate (HMKB). In the reductase reaction, this 2-ketoacid undergoes a metal-dependent reduction by NADPH to yield (R)-2,3-dihydroxy-isovalerate. This chain is Ketol-acid reductoisomerase (NADP(+)), found in Leifsonia xyli subsp. xyli (strain CTCB07).